A 189-amino-acid chain; its full sequence is Protein GrpE (189 aa).

A disordered region spans residues 1-37; that stretch reads MSDSSKEKKKKFADMVSRQKGDDQQSDNHKQTDDLNE. A compositionally biased stretch (basic and acidic residues) spans 17-33; the sequence is SRQKGDDQQSDNHKQTD.

It belongs to the GrpE family. As to quaternary structure, homodimer.

It is found in the cytoplasm. In terms of biological role, participates actively in the response to hyperosmotic and heat shock by preventing the aggregation of stress-denatured proteins, in association with DnaK and GrpE. It is the nucleotide exchange factor for DnaK and may function as a thermosensor. Unfolded proteins bind initially to DnaJ; upon interaction with the DnaJ-bound protein, DnaK hydrolyzes its bound ATP, resulting in the formation of a stable complex. GrpE releases ADP from DnaK; ATP binding to DnaK triggers the release of the substrate protein, thus completing the reaction cycle. Several rounds of ATP-dependent interactions between DnaJ, DnaK and GrpE are required for fully efficient folding. This is Protein GrpE from Wolbachia pipientis wMel.